The chain runs to 305 residues: MRLVVVAGPTASGKTALAIALARRLGGEIVNADSQQVYRGLDVGTAKPTAEERGAAPHHLLDLVEPGEGMDAARFAALADAAIAGIAARGRVPIVAGGTGLYVRALLHGVVEAPGRDPALRAALEEEAARLGRPAVHARLAAVDPAAAERIRPNDLVRVVRALEIAAGGRTPSELYQAHAFREDRYDAALLALDPPRAELHARIDARVRAMFAGGLLDEARALEARFVGALPARLPIGYAEAAAHLRGELDLEEAIRRVQVAHRRYARRQVIWLRRERGVAWIAPPHDVEALSRRVLEPRPPAIR.

8 to 15 (GPTASGKT) contributes to the ATP binding site. 10–15 (TASGKT) is a substrate binding site. The segment at 33-36 (DSQQ) is interaction with substrate tRNA.

Belongs to the IPP transferase family. In terms of assembly, monomer. The cofactor is Mg(2+).

The catalysed reaction is adenosine(37) in tRNA + dimethylallyl diphosphate = N(6)-dimethylallyladenosine(37) in tRNA + diphosphate. In terms of biological role, catalyzes the transfer of a dimethylallyl group onto the adenine at position 37 in tRNAs that read codons beginning with uridine, leading to the formation of N6-(dimethylallyl)adenosine (i(6)A). The polypeptide is tRNA dimethylallyltransferase (Anaeromyxobacter dehalogenans (strain 2CP-1 / ATCC BAA-258)).